A 479-amino-acid chain; its full sequence is Aldehyde dehydrogenase family 3 member B3 (479 aa).

Residues E223 and C257 contribute to the active site. The S-geranylgeranyl cysteine moiety is linked to residue C476. Residues 477–479 constitute a propeptide, removed in mature form; that stretch reads TLL.

The protein belongs to the aldehyde dehydrogenase family. Geranylgeranylation is important for membrane localization and enzyme activity. Expressed in testis, kidney, small intestine, spleen, white adipose tissue, liver and lung.

It localises to the cell membrane. The catalysed reaction is an aldehyde + NAD(+) + H2O = a carboxylate + NADH + 2 H(+). It catalyses the reaction hexadecanoate + NADH + 2 H(+) = hexadecanal + NAD(+) + H2O. It carries out the reaction octanal + NAD(+) + H2O = octanoate + NADH + 2 H(+). Oxidizes medium and long chain aldehydes into non-toxic fatty acids. This Mus musculus (Mouse) protein is Aldehyde dehydrogenase family 3 member B3.